The sequence spans 284 residues: Bifunctional protein FolD (284 aa).

Residues 166–168 and Ile232 each bind NADP(+); that span reads GAS.

The protein belongs to the tetrahydrofolate dehydrogenase/cyclohydrolase family. Homodimer.

The catalysed reaction is (6R)-5,10-methylene-5,6,7,8-tetrahydrofolate + NADP(+) = (6R)-5,10-methenyltetrahydrofolate + NADPH. It catalyses the reaction (6R)-5,10-methenyltetrahydrofolate + H2O = (6R)-10-formyltetrahydrofolate + H(+). Its pathway is one-carbon metabolism; tetrahydrofolate interconversion. Its function is as follows. Catalyzes the oxidation of 5,10-methylenetetrahydrofolate to 5,10-methenyltetrahydrofolate and then the hydrolysis of 5,10-methenyltetrahydrofolate to 10-formyltetrahydrofolate. This chain is Bifunctional protein FolD, found in Azotobacter vinelandii (strain DJ / ATCC BAA-1303).